The primary structure comprises 769 residues: Metal transporter CNNM4 (769 aa).

Residues 1 to 175 (MAASAGCYYG…RLRVLEEEKP (175 aa)) are Extracellular-facing. Residues Asn99 and Asn115 are each glycosylated (N-linked (GlcNAc...) asparagine). Residues 175–355 (PLLPIWLQAC…EPYSGIVREE (181 aa)) enclose the CNNM transmembrane domain. The chain crosses the membrane as a helical span at residues 176-196 (LLPIWLQACIIAVLLTLSGIF). The Cytoplasmic segment spans residues 197–237 (SGLNLGLMALDPMELRVVQRCGTEKEKRYASKIEPVRRKGN). An intramembrane region (helical) is located at residues 238–258 (YLLCSLLLGNVLVNTTLTALL). Residues 259–261 (DEL) are Cytoplasmic-facing. The helical transmembrane segment at 262–282 (IGSGLAAVLASTTGIVVLGEI) threads the bilayer. Residues 283–292 (VPQALCSRHG) are Extracellular-facing. The helical transmembrane segment at 293–313 (LAVGANTLWLTRIFMLLTFPV) threads the bilayer. Residues 314–769 (AYPVSRLLDC…SQHSLQHNAV (456 aa)) are Cytoplasmic-facing. CBS domains lie at 374 to 435 (MTKV…CTPL) and 442 to 508 (YSHP…ILDE). The segment at 717 to 769 (LMSSRLDSSPQSPEGGTRKPDSTLSERSEVLEDETTSLLNQRNSQHSLQHNAV) is disordered. Residues 721-730 (RLDSSPQSPE) show a composition bias toward polar residues. The span at 732–746 (GTRKPDSTLSERSEV) shows a compositional bias: basic and acidic residues. The span at 752-769 (TSLLNQRNSQHSLQHNAV) shows a compositional bias: polar residues.

It belongs to the ACDP family.

It localises to the cell membrane. Its function is as follows. Probable metal transporter. The protein is Metal transporter CNNM4 (cnnm4) of Xenopus tropicalis (Western clawed frog).